We begin with the raw amino-acid sequence, 243 residues long: NAD-dependent protein deacetylase (243 aa).

Positions 1–243 (MKHDLETLKH…VSVVKSLMTE (243 aa)) constitute a Deacetylase sirtuin-type domain. Positions 24, 35, 36, 105, 107, 108, and 123 each coordinate NAD(+). Phe35 serves as a coordination point for nicotinamide. Residues Ile107 and Asp108 each contribute to the nicotinamide site. His123 serves as the catalytic Proton acceptor. Zn(2+) contacts are provided by Cys131, Cys134, Cys151, and Cys154. NAD(+) is bound by residues Ser192, Ser193, Asn215, and Asp232.

This sequence belongs to the sirtuin family. Class U subfamily. Requires Zn(2+) as cofactor.

The protein resides in the cytoplasm. It catalyses the reaction N(6)-acetyl-L-lysyl-[protein] + NAD(+) + H2O = 2''-O-acetyl-ADP-D-ribose + nicotinamide + L-lysyl-[protein]. In terms of biological role, NAD-dependent protein deacetylase which modulates the activities of several enzymes which are inactive in their acetylated form. The polypeptide is NAD-dependent protein deacetylase (Staphylococcus aureus (strain MRSA252)).